The chain runs to 519 residues: Dihydropyrimidinase (519 aa).

2 residues coordinate Zn(2+): His67 and His69. At Ser79 the chain carries Phosphoserine. A Zn(2+)-binding site is contributed by Lys159. At Lys159 the chain carries N6-carboxylysine. Tyr164 contacts substrate. 2 residues coordinate Zn(2+): His192 and His248. Position 256 is an N6-succinyllysine (Lys256). Asp326 serves as a coordination point for Zn(2+). Substrate is bound at residue Asn347. Thr510 is modified (phosphothreonine).

Belongs to the metallo-dependent hydrolases superfamily. Hydantoinase/dihydropyrimidinase family. In terms of assembly, homotetramer. Zn(2+) serves as cofactor. Carboxylation allows a single lysine to coordinate two zinc ions.

The catalysed reaction is 5,6-dihydrouracil + H2O = 3-(carbamoylamino)propanoate + H(+). Functionally, catalyzes the second step of the reductive pyrimidine degradation, the reversible hydrolytic ring opening of dihydropyrimidines. Can catalyze the ring opening of 5,6-dihydrouracil to N-carbamyl-alanine and of 5,6-dihydrothymine to N-carbamyl-amino isobutyrate. The protein is Dihydropyrimidinase (Dpys) of Rattus norvegicus (Rat).